The primary structure comprises 347 residues: Protein-glutamate methylesterase/protein-glutamine glutaminase (347 aa).

The region spanning 3–119 (EALVVDDSHF…STELSGHSEE (117 aa)) is the Response regulatory domain. Asp53 bears the 4-aspartylphosphate mark. The segment at 132–154 (PTAGHDVEMEPASPPDATTSEYA) is disordered. Positions 152–346 (EYADNPTLLI…EAIADSIRRT (195 aa)) constitute a CheB-type methylesterase domain. Active-site residues include Ser164, His191, and Asp288.

It belongs to the CheB family. In terms of processing, phosphorylated by CheA. Phosphorylation of the N-terminal regulatory domain activates the methylesterase activity.

Its subcellular location is the cytoplasm. The catalysed reaction is [protein]-L-glutamate 5-O-methyl ester + H2O = L-glutamyl-[protein] + methanol + H(+). It catalyses the reaction L-glutaminyl-[protein] + H2O = L-glutamyl-[protein] + NH4(+). Involved in the modulation of the chemotaxis system; catalyzes the demethylation of specific methylglutamate residues introduced into the Htr transducer proteins (methyl-accepting chemotaxis proteins) by CheR. Also required for Htr deamidations, at least at a specific glutamine-glutamate pair in HTR-II and a specific aspartate-glutamine pair in Htr4. The sequence is that of Protein-glutamate methylesterase/protein-glutamine glutaminase from Halobacterium salinarum (strain ATCC 29341 / DSM 671 / R1).